Reading from the N-terminus, the 640-residue chain is Choline O-acetyltransferase (640 aa).

Residues 1–22 show a composition bias toward basic and acidic residues; that stretch reads MPDLEKDMQKKEKDSRSKDEPA. Residues 1 to 28 form a disordered region; it reads MPDLEKDMQKKEKDSRSKDEPAVPKLPV. The Proton acceptor role is filled by H334. Residues 412-424, S450, and Q551 each bind CoA; that span reads GKEF…TSPD.

This sequence belongs to the carnitine/choline acetyltransferase family. In terms of tissue distribution, detected in brain and in embryonic retina.

It carries out the reaction choline + acetyl-CoA = acetylcholine + CoA. Catalyzes the reversible synthesis of acetylcholine (ACh) from acetyl CoA and choline at cholinergic synapses. This chain is Choline O-acetyltransferase (CHAT), found in Gallus gallus (Chicken).